The primary structure comprises 315 residues: MYTQDRFMSPQYKARFKGYVQVTKPGIIFGNLISVAGGFLLAAKGDVNLALMLASLVGLSLVVASGCAVNNCIDRDIDAKMQRTCKRVTVTGEIAVGNVLAFGLALGVLGFSILALFTNALALLFAVIGYIVYVGVYSLYMKRNSVYGTLVGSFSGAVPPVVGYCSVTGQMDMGAAILLLMFSLWQMPHSYAIAIFRFNDYAAANIPVLPVAEGMTKAKLHIVLYIAVFALVSALLPLAGYTGIAFMAVTCATSLWWLAMALKGYRHGVDIQRWARQVFGFSIITIMALSITMALDSQVIKEQVIGQTNLFTLVK.

Transmembrane regions (helical) follow at residues 25–45, 49–69, 87–107, 120–139, 145–165, 176–196, 220–240, 242–262, and 280–300; these read PGII…AAKG, LALM…GCAV, RVTV…LALG, ALAL…VYSL, SVYG…VGYC, AILL…IAIF, LHIV…PLAG, TGIA…AMAL, and GFSI…SQVI.

Belongs to the UbiA prenyltransferase family. Protoheme IX farnesyltransferase subfamily.

The protein resides in the cell inner membrane. It catalyses the reaction heme b + (2E,6E)-farnesyl diphosphate + H2O = Fe(II)-heme o + diphosphate. The protein operates within porphyrin-containing compound metabolism; heme O biosynthesis; heme O from protoheme: step 1/1. Its function is as follows. Converts heme B (protoheme IX) to heme O by substitution of the vinyl group on carbon 2 of heme B porphyrin ring with a hydroxyethyl farnesyl side group. The polypeptide is Protoheme IX farnesyltransferase 1 (Shewanella sp. (strain W3-18-1)).